The following is a 135-amino-acid chain: MFARLTSTLFALAAVSAVFAAPGATTEQCNGGEVQCCNSVQDANNLDSSVKKIITGLLHLDLKQITGQVGVTCTSVNVLGIGGGSSWYGFAFSYSYILASDWAIGVCSTQQKVCCTNNSFHGLIALGCTPINVSV.

The N-terminal stretch at 1 to 20 (MFARLTSTLFALAAVSAVFA) is a signal peptide. 4 disulfide bridges follow: Cys29–Cys114, Cys36–Cys107, Cys37–Cys73, and Cys115–Cys128. N-linked (GlcNAc...) asparagine glycans are attached at residues Asn117 and Asn132.

The protein belongs to the fungal hydrophobin family. In terms of assembly, self-assembles to form functional amyloid fibrils called rodlets. Self-assembly into fibrillar rodlets occurs spontaneously at hydrophobic:hydrophilic interfaces and the rodlets further associate laterally to form amphipathic monolayers.

It is found in the secreted. Its subcellular location is the cell wall. Aerial growth, conidiation, and dispersal of filamentous fungi in the environment rely upon a capability of their secreting small amphipathic proteins called hydrophobins (HPBs) with low sequence identity. Class I can self-assemble into an outermost layer of rodlet bundles on aerial cell surfaces, conferring cellular hydrophobicity that supports fungal growth, development and dispersal; whereas Class II form highly ordered films at water-air interfaces through intermolecular interactions but contribute nothing to the rodlet structure. This is Class I hydrophobin 2 from Coprinopsis cinerea (strain Okayama-7 / 130 / ATCC MYA-4618 / FGSC 9003) (Inky cap fungus).